Here is a 352-residue protein sequence, read N- to C-terminus: UDP-N-acetylglucosamine--N-acetylmuramyl-(pentapeptide) pyrophosphoryl-undecaprenol N-acetylglucosamine transferase 2 (352 aa).

UDP-N-acetyl-alpha-D-glucosamine is bound by residues 11–13 (SAG), arginine 164, serine 194, and glutamine 289.

Belongs to the glycosyltransferase 28 family. MurG subfamily.

The protein resides in the cell membrane. It catalyses the reaction di-trans,octa-cis-undecaprenyl diphospho-N-acetyl-alpha-D-muramoyl-L-alanyl-D-glutamyl-meso-2,6-diaminopimeloyl-D-alanyl-D-alanine + UDP-N-acetyl-alpha-D-glucosamine = di-trans,octa-cis-undecaprenyl diphospho-[N-acetyl-alpha-D-glucosaminyl-(1-&gt;4)]-N-acetyl-alpha-D-muramoyl-L-alanyl-D-glutamyl-meso-2,6-diaminopimeloyl-D-alanyl-D-alanine + UDP + H(+). The protein operates within cell wall biogenesis; peptidoglycan biosynthesis. Cell wall formation. Catalyzes the transfer of a GlcNAc subunit on undecaprenyl-pyrophosphoryl-MurNAc-pentapeptide (lipid intermediate I) to form undecaprenyl-pyrophosphoryl-MurNAc-(pentapeptide)GlcNAc (lipid intermediate II). The chain is UDP-N-acetylglucosamine--N-acetylmuramyl-(pentapeptide) pyrophosphoryl-undecaprenol N-acetylglucosamine transferase 2 from Bacillus cereus (strain ATCC 14579 / DSM 31 / CCUG 7414 / JCM 2152 / NBRC 15305 / NCIMB 9373 / NCTC 2599 / NRRL B-3711).